The sequence spans 700 residues: Protein claret segregational (700 aa).

Phosphoserine is present on residues Ser94 and Ser96. Residues 141–185 (APSSITATAVKRPPVTRPAPRAAGGAAAKKPAGTGAAASSGAAAA) form a disordered region. Residues 149 to 185 (AVKRPPVTRPAPRAAGGAAAKKPAGTGAAASSGAAAA) show a composition bias toward low complexity. Residues 196-346 (KARFHDLLEK…ELHNTVMDLR (151 aa)) adopt a coiled-coil conformation. The Kinesin motor domain occupies 348–670 (NIRVFCRIRP…LRFAASVNSC (323 aa)). An ATP-binding site is contributed by 434 to 441 (GQTGSGKT). Residues 664 to 668 (AASVN) form a required for minus-end directionality region. A disordered region spans residues 681 to 700 (LNNSVANSSTQSNNSGSFDK).

Belongs to the TRAFAC class myosin-kinesin ATPase superfamily. Kinesin family. NCD subfamily.

The protein localises to the cytoplasm. Its subcellular location is the cytoskeleton. The enzyme catalyses ATP + H2O = ADP + phosphate + H(+). Its function is as follows. Minus-end-directed microtubule-based motor protein. Has ATPase activity. Required for normal chromosomal segregation in meiosis in females, and in early mitotic divisions of the embryo. The chain is Protein claret segregational (ncd) from Drosophila melanogaster (Fruit fly).